Consider the following 463-residue polypeptide: MPTTTEFDTIAAISTPPGEGGISIIRISGDQTFNVVTQIFKGKDLSRVQSHTINYGHIVDPDTHQEVDEVMATVMRAPKTYTREDVVEINCHGGLVATNEILQLILSHGARMAEPGEFTKRAFLNGRLDLSQAEAVMDLIRAKTDKSMKVALNQLDGDLSKLIRHLRQDILDVLAQVEVNIDYPEYDAVETMTTKMLKEKATEVAQSINQLLATAKQGKVLREGLATAIIGRPNVGKSSLLNHLLHEDKAIVTDVAGTTRDVIEEYVNVRGVPLKLVDTAGIRDTEDKVEKIGVERSRKAIGAADLVLLVLDNSQPLTAEDRELLQETDQSKRIVILNKTDLPARLDQAELAQLVDLSDVLSMSVLEQSGVTQLEQRIAKMFFNEGIESSQNNVMVTNARHIGLLNQAKQALQDVQTGLAAGMPVDLVQIDMTRCWEFLGQITGDSYEDELLDQLFSQFCLGK.

(6S)-5-formyl-5,6,7,8-tetrahydrofolate contacts are provided by Arg-26, Glu-88, and Arg-127. The TrmE-type G domain occupies 224-383 (GLATAIIGRP…LEQRIAKMFF (160 aa)). Position 234 (Asn-234) interacts with K(+). GTP is bound by residues 234-239 (NVGKSS), 253-259 (TDVAGTT), and 278-281 (DTAG). Position 238 (Ser-238) interacts with Mg(2+). Thr-253, Val-255, and Thr-258 together coordinate K(+). A Mg(2+)-binding site is contributed by Thr-259. Lys-463 contributes to the (6S)-5-formyl-5,6,7,8-tetrahydrofolate binding site.

Belongs to the TRAFAC class TrmE-Era-EngA-EngB-Septin-like GTPase superfamily. TrmE GTPase family. In terms of assembly, homodimer. Heterotetramer of two MnmE and two MnmG subunits. K(+) serves as cofactor.

The protein resides in the cytoplasm. Its function is as follows. Exhibits a very high intrinsic GTPase hydrolysis rate. Involved in the addition of a carboxymethylaminomethyl (cmnm) group at the wobble position (U34) of certain tRNAs, forming tRNA-cmnm(5)s(2)U34. This is tRNA modification GTPase MnmE from Lactiplantibacillus plantarum (strain ATCC BAA-793 / NCIMB 8826 / WCFS1) (Lactobacillus plantarum).